Here is a 490-residue protein sequence, read N- to C-terminus: Cobyric acid synthase (490 aa).

The region spanning 251-444 (GLTIAVIHLP…LHGIFANDAF (194 aa)) is the GATase cobBQ-type domain. Catalysis depends on Cys329, which acts as the Nucleophile. His436 is an active-site residue.

It belongs to the CobB/CobQ family. CobQ subfamily.

It participates in cofactor biosynthesis; adenosylcobalamin biosynthesis. Functionally, catalyzes amidations at positions B, D, E, and G on adenosylcobyrinic A,C-diamide. NH(2) groups are provided by glutamine, and one molecule of ATP is hydrogenolyzed for each amidation. The polypeptide is Cobyric acid synthase (Roseiflexus castenholzii (strain DSM 13941 / HLO8)).